Here is a 1337-residue protein sequence, read N- to C-terminus: DNA-directed RNA polymerase subunit beta' (1337 aa).

The Zn(2+) site is built by Cys-60, Cys-62, Cys-75, and Cys-78. The Mg(2+) site is built by Asp-536, Asp-538, and Asp-540. Zn(2+) contacts are provided by Cys-895, Cys-974, Cys-981, and Cys-984.

It belongs to the RNA polymerase beta' chain family. In terms of assembly, the RNAP catalytic core consists of 2 alpha, 1 beta, 1 beta' and 1 omega subunit. When a sigma factor is associated with the core the holoenzyme is formed, which can initiate transcription. Mg(2+) serves as cofactor. Requires Zn(2+) as cofactor.

It carries out the reaction RNA(n) + a ribonucleoside 5'-triphosphate = RNA(n+1) + diphosphate. Functionally, DNA-dependent RNA polymerase catalyzes the transcription of DNA into RNA using the four ribonucleoside triphosphates as substrates. This Bifidobacterium adolescentis (strain ATCC 15703 / DSM 20083 / NCTC 11814 / E194a) protein is DNA-directed RNA polymerase subunit beta'.